The following is a 395-amino-acid chain: Elongation factor Tu (395 aa).

Positions 10-204 constitute a tr-type G domain; sequence KPHLNIGTIG…AVDTWIELPE (195 aa). Residues 19–26 are G1; the sequence is GHVDHGKT. 19-26 contributes to the GTP binding site; that stretch reads GHVDHGKT. Thr-26 lines the Mg(2+) pocket. The interval 60–64 is G2; it reads GITIN. The interval 81–84 is G3; the sequence is DCPG. Residues 81–85 and 136–139 contribute to the GTP site; these read DCPGH and NKVD. The interval 136–139 is G4; it reads NKVD. Residues 174–176 form a G5 region; it reads SAL.

It belongs to the TRAFAC class translation factor GTPase superfamily. Classic translation factor GTPase family. EF-Tu/EF-1A subfamily. Monomer.

The protein localises to the cytoplasm. It catalyses the reaction GTP + H2O = GDP + phosphate + H(+). Functionally, GTP hydrolase that promotes the GTP-dependent binding of aminoacyl-tRNA to the A-site of ribosomes during protein biosynthesis. The polypeptide is Elongation factor Tu (Christiangramia forsetii (strain DSM 17595 / CGMCC 1.15422 / KT0803) (Gramella forsetii)).